The chain runs to 159 residues: Regulatory protein RecX (159 aa).

The protein belongs to the RecX family.

The protein resides in the cytoplasm. Its function is as follows. Modulates RecA activity. This chain is Regulatory protein RecX, found in Acinetobacter baylyi (strain ATCC 33305 / BD413 / ADP1).